Here is a 367-residue protein sequence, read N- to C-terminus: Probable protein phosphatase 2C 67 (367 aa).

The segment at 1 to 79 (MAHQKREATS…DEKAATNSNV (79 aa)) is disordered. The segment covering 31 to 46 (AEKEHILTSDASHETN) has biased composition (basic and acidic residues). Positions 91–365 (EADAAEDKGC…DNCTAVLIVF (275 aa)) constitute a PPM-type phosphatase domain. Residues aspartate 131, glycine 132, aspartate 312, and aspartate 356 each coordinate Mn(2+).

This sequence belongs to the PP2C family. Requires Mg(2+) as cofactor. It depends on Mn(2+) as a cofactor.

It carries out the reaction O-phospho-L-seryl-[protein] + H2O = L-seryl-[protein] + phosphate. It catalyses the reaction O-phospho-L-threonyl-[protein] + H2O = L-threonyl-[protein] + phosphate. The polypeptide is Probable protein phosphatase 2C 67 (Oryza sativa subsp. japonica (Rice)).